The sequence spans 360 residues: D-alanine--D-alanine ligase (360 aa).

Positions 146 to 352 (KLCAVQAGIH…FTELIDRLVR (207 aa)) constitute an ATP-grasp domain. 179-234 (KKRFAPPFFVKPANLGSSVGIAKIHSFDELENALDEACRLDVKILVEKAIEGREVE) is a binding site for ATP. Mg(2+) is bound by residues Asp305, Glu319, and Asn321.

The protein belongs to the D-alanine--D-alanine ligase family. The cofactor is Mg(2+). Mn(2+) is required as a cofactor.

It is found in the cytoplasm. It catalyses the reaction 2 D-alanine + ATP = D-alanyl-D-alanine + ADP + phosphate + H(+). It participates in cell wall biogenesis; peptidoglycan biosynthesis. Functionally, cell wall formation. The sequence is that of D-alanine--D-alanine ligase from Chlorobium phaeobacteroides (strain BS1).